The chain runs to 165 residues: DELTA-actitoxin-Oor1a (165 aa).

The tract at residues 1 to 17 is N-terminal region; sequence ATFRVLAKVLAELGKVS. 5 residues coordinate phosphocholine: S41, V74, S92, P94, and Y125. The trp-rich region, which is important for the binding to lipid membrane stretch occupies residues 92 to 107; that stretch reads SVPYDYNLYSNWWNVK.

The protein belongs to the actinoporin family. Sea anemone subfamily. As to quaternary structure, octamer or nonamer in membranes. Monomer in the soluble state.

The protein resides in the secreted. The protein localises to the nematocyst. It is found in the target cell membrane. In terms of biological role, pore-forming protein that forms cations-selective hydrophilic pores of around 1 nm and causes cardiac stimulation and cytolysis. Pore formation is a multi-step process that involves specific recognition of membrane sphingomyelin (but neither cholesterol nor phosphatidylcholine) using aromatic rich region and adjacent phosphocholine (POC) binding site, firm binding to the membrane (mainly driven by hydrophobic interactions) accompanied by the transfer of the N-terminal region to the lipid-water interface and finally pore formation after oligomerization of monomers. Cytolytic effects include red blood cells hemolysis, platelet aggregation and lysis, cytotoxic and cytostatic effects on fibroblasts. Lethality in mammals has been ascribed to severe vasospasm of coronary vessels, cardiac arrhythmia, and inotropic effects. In Oulactis orientalis (Japan anemone), this protein is DELTA-actitoxin-Oor1a.